The primary structure comprises 189 residues: MIDQFERLPGIGPRTAQRLALHLLRQPEDQIRAFADALLAARSQVGQCQTCFHLSAEPLCDICRDGKRCDQLLCVVADSRDLLALERTREYKGRYHVLGGLISPMDGIGPDMLQIPSLIQRVDRDGISEVILALTPSVEGDTTSLYLARLLKPFTQVSRIAYGLPVGSELEYADEVTLTRALEGRRAMQ.

A C4-type zinc finger spans residues Cys-48–Cys-63. The 95-residue stretch at Gln-71–Pro-165 folds into the Toprim domain.

It belongs to the RecR family.

In terms of biological role, may play a role in DNA repair. It seems to be involved in an RecBC-independent recombinational process of DNA repair. It may act with RecF and RecO. In Prochlorococcus marinus (strain MIT 9313), this protein is Recombination protein RecR.